The chain runs to 164 residues: UPF0225 protein Shewana3_2159 (164 aa).

Belongs to the UPF0225 family.

This chain is UPF0225 protein Shewana3_2159, found in Shewanella sp. (strain ANA-3).